The chain runs to 199 residues: Pathogenesis-related 5 protein Cup a 3 (199 aa).

8 disulfides stabilise this stretch: cysteine 9–cysteine 198, cysteine 50–cysteine 60, cysteine 65–cysteine 71, cysteine 113–cysteine 187, cysteine 118–cysteine 171, cysteine 126–cysteine 136, cysteine 140–cysteine 149, and cysteine 150–cysteine 158.

It belongs to the thaumatin family. Expressed in pollen.

It is found in the secreted. It localises to the extracellular space. Its subcellular location is the extracellular matrix. The protein localises to the pollen coat. The protein resides in the cytoplasm. It is found in the nucleus. It localises to the mitochondrion. Its subcellular location is the endoplasmic reticulum. The protein localises to the golgi apparatus. The protein resides in the golgi stack. It is found in the vesicle. It localises to the vacuole. The polypeptide is Pathogenesis-related 5 protein Cup a 3 (Hesperocyparis arizonica (Arizona cypress)).